Consider the following 154-residue polypeptide: Transcription antitermination protein NusB (154 aa).

Belongs to the NusB family.

Functionally, involved in transcription antitermination. Required for transcription of ribosomal RNA (rRNA) genes. Binds specifically to the boxA antiterminator sequence of the ribosomal RNA (rrn) operons. The protein is Transcription antitermination protein NusB of Bordetella parapertussis (strain 12822 / ATCC BAA-587 / NCTC 13253).